The primary structure comprises 391 residues: MFPNGTASSPSSPSPSPGSCGEGGGSRGPGAGAADGMEEPGRNASQNGTLSEGQGSAILISFIYSVVCLVGLCGNSMVIYVILRYAKMKTATNIYILNLAIADELLMLSVPFLVTSTLLRHWPFGALLCRLVLSVDAVNMFTSIYCLTVLSVDRYVAVVHPIKAARYRRPTVAKVVNLGVWVLSLLVILPIVVFSRTAANSDGTVACNMLMPEPAQRWLVGFVLYTFLMGFLLPVGAICLCYVLIIAKMRMVALKAGWQQRKRSERKITLMVMMVVMVFVICWMPFYVVQLVNVFAEQDDATVSQLSVILGYANSCANPILYGFLSDNFKRSFQRILCLSWMDNAAEEPVDYYATALKSRAYSVEDFQPENLESGGAVFRNGTCTSRITTL.

Residues methionine 1–serine 11 are compositionally biased toward low complexity. A disordered region spans residues methionine 1–threonine 49. Residues methionine 1 to glycine 55 lie on the Extracellular side of the membrane. N-linked (GlcNAc...) asparagine glycosylation is present at asparagine 4. A compositionally biased stretch (gly residues) spans cysteine 20–alanine 33. N-linked (GlcNAc...) asparagine glycosylation is found at asparagine 43 and asparagine 47. The helical transmembrane segment at serine 56–leucine 83 threads the bilayer. Over arginine 84–asparagine 93 the chain is Cytoplasmic. The helical transmembrane segment at isoleucine 94–leucine 119 threads the bilayer. The Extracellular segment spans residues arginine 120–arginine 130. Cysteines 129 and 207 form a disulfide. The chain crosses the membrane as a helical span at residues leucine 131–valine 152. Residues aspartate 153–lysine 174 lie on the Cytoplasmic side of the membrane. The helical transmembrane segment at valine 175–serine 195 threads the bilayer. At arginine 196 to tryptophan 218 the chain is on the extracellular side. A helical membrane pass occupies residues leucine 219–valine 243. Residues leucine 244–threonine 269 are Cytoplasmic-facing. The helical transmembrane segment at leucine 270 to phenylalanine 295 threads the bilayer. The Extracellular portion of the chain corresponds to alanine 296–threonine 302. A helical transmembrane segment spans residues valine 303–serine 326. At aspartate 327–leucine 391 the chain is on the cytoplasmic side. The S-palmitoyl cysteine moiety is linked to residue cysteine 338.

It belongs to the G-protein coupled receptor 1 family. As to quaternary structure, interacts with SKB1.

The protein resides in the cell membrane. Its function is as follows. Receptor for somatostatin with higher affinity for somatostatin-14 than -28. This receptor is coupled via pertussis toxin sensitive G proteins to inhibition of adenylyl cyclase. In addition it stimulates phosphotyrosine phosphatase and Na(+)/H(+) exchanger via pertussis toxin insensitive G proteins. In Canis lupus familiaris (Dog), this protein is Somatostatin receptor type 1 (SSTR1).